Reading from the N-terminus, the 490-residue chain is Thiamine biosynthesis bifunctional protein ThiED (490 aa).

The segment at 1–213 (MASNGHTLRL…PDPALAATEI (213 aa)) is thiamine-phosphate synthase. 4-amino-2-methyl-5-(diphosphooxymethyl)pyrimidine contacts are provided by residues 50–54 (QYRNK) and asparagine 82. Residues aspartate 83 and aspartate 102 each coordinate Mg(2+). Serine 121 is a binding site for 4-amino-2-methyl-5-(diphosphooxymethyl)pyrimidine. 147–149 (SRS) is a 2-[(2R,5Z)-2-carboxy-4-methylthiazol-5(2H)-ylidene]ethyl phosphate binding site. Residue lysine 150 coordinates 4-amino-2-methyl-5-(diphosphooxymethyl)pyrimidine. 2-[(2R,5Z)-2-carboxy-4-methylthiazol-5(2H)-ylidene]ethyl phosphate-binding positions include glycine 177 and 197-198 (IS). Residues 229 to 490 (LTVAGSDSGG…ILAAEDVRDR (262 aa)) form a hydroxymethylpyrimidine/phosphomethylpyrimidine kinase region. Glutamine 266 lines the 4-amino-5-hydroxymethyl-2-methylpyrimidine pocket.

This sequence in the N-terminal section; belongs to the thiamine-phosphate synthase family. In the C-terminal section; belongs to the ThiD family. Requires Mg(2+) as cofactor.

It carries out the reaction 2-[(2R,5Z)-2-carboxy-4-methylthiazol-5(2H)-ylidene]ethyl phosphate + 4-amino-2-methyl-5-(diphosphooxymethyl)pyrimidine + 2 H(+) = thiamine phosphate + CO2 + diphosphate. The catalysed reaction is 2-(2-carboxy-4-methylthiazol-5-yl)ethyl phosphate + 4-amino-2-methyl-5-(diphosphooxymethyl)pyrimidine + 2 H(+) = thiamine phosphate + CO2 + diphosphate. It catalyses the reaction 4-methyl-5-(2-phosphooxyethyl)-thiazole + 4-amino-2-methyl-5-(diphosphooxymethyl)pyrimidine + H(+) = thiamine phosphate + diphosphate. The enzyme catalyses 4-amino-5-hydroxymethyl-2-methylpyrimidine + ATP = 4-amino-2-methyl-5-(phosphooxymethyl)pyrimidine + ADP + H(+). It carries out the reaction 4-amino-2-methyl-5-(phosphooxymethyl)pyrimidine + ATP = 4-amino-2-methyl-5-(diphosphooxymethyl)pyrimidine + ADP. Its pathway is cofactor biosynthesis; thiamine diphosphate biosynthesis; 4-amino-2-methyl-5-diphosphomethylpyrimidine from 5-amino-1-(5-phospho-D-ribosyl)imidazole: step 3/3. It participates in cofactor biosynthesis; thiamine diphosphate biosynthesis; thiamine phosphate from 4-amino-2-methyl-5-diphosphomethylpyrimidine and 4-methyl-5-(2-phosphoethyl)-thiazole: step 1/1. Functionally, condenses 4-methyl-5-(beta-hydroxyethyl)thiazole monophosphate (THZ-P) and 2-methyl-4-amino-5-hydroxymethyl pyrimidine pyrophosphate (HMP-PP) to form thiamine monophosphate (TMP). Catalyzes the phosphorylation of hydroxymethylpyrimidine phosphate (HMP-P) to HMP-PP, and of HMP to HMP-P. In Geobacter sulfurreducens (strain ATCC 51573 / DSM 12127 / PCA), this protein is Thiamine biosynthesis bifunctional protein ThiED (thiDE).